We begin with the raw amino-acid sequence, 365 residues long: MSNYNKPIQLLCVLVVVLFFINNQFVQRTTWSRGLRSPPLDSRIFQEKSEIERSTLPPIPKGFLSSKLASTARLANHIFELVSVYGMAKSLNRKPAIFVEDSKYNLLITGVRKVLPGLLDEFQIFEYPVHNKATKVPLSEKCCIFDNPDKFNNISSEYLHLTGHFYQSWKYFDKYKEKVQSFVKPAIDFSPLPNSDSSNFISRICIHIRRTDFVDGQHHSSNVSFIKPALEFIKEREQKDVNKKMLTVIMGDDPDFEAKMFEGTVRAKKEAKIEETTKYFVSENTPQDDLAYSHYSCDATLITAPSSTFGWWLGYLSKGQAVYYQDIRSTNDVNYKKGVLDPDDFFVPSWTSIMLDENKKVVVVT.

Belongs to the glycosyltransferase 11 family.

The chain is Putative glycosyltransferase C06E1.7 from Caenorhabditis elegans.